A 182-amino-acid polypeptide reads, in one-letter code: Small ribosomal subunit protein uS4c (182 aa).

The S4 RNA-binding domain maps to 82 to 143; it reads MRLDNILFRL…KQRSKALIQN (62 aa).

It belongs to the universal ribosomal protein uS4 family. Part of the 30S ribosomal subunit. Contacts protein S5. The interaction surface between S4 and S5 is involved in control of translational fidelity.

Its subcellular location is the plastid. The protein resides in the chloroplast. One of the primary rRNA binding proteins, it binds directly to 16S rRNA where it nucleates assembly of the body of the 30S subunit. In terms of biological role, with S5 and S12 plays an important role in translational accuracy. The chain is Small ribosomal subunit protein uS4c (rps4) from Iris domestica (Leopard lily).